The chain runs to 182 residues: Adenine phosphoribosyltransferase (182 aa).

The protein belongs to the purine/pyrimidine phosphoribosyltransferase family. Homodimer.

It is found in the cytoplasm. The enzyme catalyses AMP + diphosphate = 5-phospho-alpha-D-ribose 1-diphosphate + adenine. The protein operates within purine metabolism; AMP biosynthesis via salvage pathway; AMP from adenine: step 1/1. Catalyzes a salvage reaction resulting in the formation of AMP, that is energically less costly than de novo synthesis. This is Adenine phosphoribosyltransferase from Campylobacter jejuni subsp. doylei (strain ATCC BAA-1458 / RM4099 / 269.97).